The following is a 356-amino-acid chain: Sensor protein BasS (356 aa).

Residues 1–13 lie on the Cytoplasmic side of the membrane; it reads MRFQRRAMTLRQR. Residues 14-34 form a helical membrane-spanning segment; that stretch reads LMLTIGLILLVFQLISTFWLW. Residues 35–64 are Periplasmic-facing; that stretch reads HESTEQIQLFEQALRDNRNNDRHIMHEIRE. Residues 65 to 88 traverse the membrane as a helical segment; the sequence is AVASLIVPGVFMVSLTLLICYQAV. The region spanning 89-141 is the HAMP domain; sequence RRITRPLAELQKELEARTADNLAPIAIHSSTLEIESVVSAINQLVTRLTTTLD. Over 89-356 the chain is Cytoplasmic; it reads RRITRPLAEL…TRAWVLLKKA (268 aa). Residues 149-356 enclose the Histidine kinase domain; that stretch reads DVAHELRTPL…TRAWVLLKKA (208 aa). His-152 is subject to Phosphohistidine; by autocatalysis.

In terms of processing, autophosphorylated.

Its subcellular location is the cell inner membrane. The enzyme catalyses ATP + protein L-histidine = ADP + protein N-phospho-L-histidine.. Functionally, member of the two-component regulatory system BasS/BasR. Autophosphorylates and activates BasR by phosphorylation. Plays a role in the adaptation of the organism to the host environment, in particular to neutrophils, and therefore it plays a role in virulence as well. This chain is Sensor protein BasS (basS), found in Salmonella typhimurium (strain LT2 / SGSC1412 / ATCC 700720).